The chain runs to 333 residues: UPF0285 protein MTH_1441 (333 aa).

The protein belongs to the UPF0285 family.

In Methanothermobacter thermautotrophicus (strain ATCC 29096 / DSM 1053 / JCM 10044 / NBRC 100330 / Delta H) (Methanobacterium thermoautotrophicum), this protein is UPF0285 protein MTH_1441.